The primary structure comprises 163 residues: 3-isopropylmalate dehydratase small subunit (163 aa).

The protein belongs to the LeuD family. LeuD type 2 subfamily. In terms of assembly, heterodimer of LeuC and LeuD.

It catalyses the reaction (2R,3S)-3-isopropylmalate = (2S)-2-isopropylmalate. Its pathway is amino-acid biosynthesis; L-leucine biosynthesis; L-leucine from 3-methyl-2-oxobutanoate: step 2/4. Its function is as follows. Catalyzes the isomerization between 2-isopropylmalate and 3-isopropylmalate, via the formation of 2-isopropylmaleate. The protein is 3-isopropylmalate dehydratase small subunit of Clostridioides difficile (strain 630) (Peptoclostridium difficile).